Consider the following 428-residue polypeptide: Beta-1,3-galactosyl-O-glycosyl-glycoprotein beta-1,6-N-acetylglucosaminyltransferase (428 aa).

Topologically, residues 1–9 (MLRTLLRRR) are cytoplasmic. The segment at 5–9 (LLRRR) is mediates interaction with GOLPH3 and is necessary and sufficient for localization to the Golgi. Residues 10–32 (LFSYPTKYYFMVLVLSLITFSVL) form a helical; Signal-anchor for type II membrane protein membrane-spanning segment. Residues 33–121 (RIHQKPEFVS…EPLSKEEAEF (89 aa)) are stem region. Residues 33–428 (RIHQKPEFVS…RHKALETLKH (396 aa)) lie on the Lumenal side of the membrane. N-linked (GlcNAc...) asparagine glycans are attached at residues Asn-58 and Asn-95. 4 disulfide bridges follow: Cys-59–Cys-413, Cys-100–Cys-172, Cys-151–Cys-199, and Cys-372–Cys-381. The segment at 122–428 (PIAYSIVVHH…RHKALETLKH (307 aa)) is catalytic. UDP-N-acetyl-alpha-D-glucosamine-binding positions include 128-130 (VVH), 155-157 (DTK), and Tyr-187. A glycoprotein is bound by residues Glu-243, Lys-251, Arg-254, Glu-320, Lys-341, and Tyr-358. Catalysis depends on Glu-320, which acts as the Nucleophile. Positions 378 and 401 each coordinate UDP-N-acetyl-alpha-D-glucosamine.

This sequence belongs to the glycosyltransferase 14 family. As to quaternary structure, interacts with GOLPH3; may control GCNT1 retention in the Golgi. Highly expressed in activated T-lymphocytes and myeloid cells.

The protein resides in the golgi apparatus membrane. The enzyme catalyses a 3-O-[beta-D-galactosyl-(1-&gt;3)-N-acetyl-alpha-D-galactosaminyl]-L-seryl-[protein] + UDP-N-acetyl-alpha-D-glucosamine = 3-O-{beta-D-galactosyl-(1-&gt;3)-[N-acetyl-beta-D-glucosaminyl-(1-&gt;6)]-N-acetyl-alpha-D-galactosaminyl}-L-seryl-[protein] + UDP + H(+). The catalysed reaction is a 3-O-[beta-D-galactosyl-(1-&gt;3)-N-acetyl-alpha-D-galactosaminyl]-L-threonyl-[protein] + UDP-N-acetyl-alpha-D-glucosamine = a 3-O-{beta-D-galactosyl-(1-&gt;3)-[N-acetyl-beta-D-glucosaminyl-(1-&gt;6)]-N-acetyl-alpha-D-galactosaminyl}-L-threonyl-[protein] + UDP + H(+). It carries out the reaction a globoside GalGb4Cer + UDP-N-acetyl-alpha-D-glucosamine = a globoside GlcNAc-(beta1-&gt;6)-GalGb4Cer + UDP + H(+). It catalyses the reaction a ganglioside GA1 + UDP-N-acetyl-alpha-D-glucosamine = a ganglioside beta-D-GlcNAc-(1-&gt;6)-GA1 + UDP + H(+). Its pathway is protein modification; protein glycosylation. It participates in glycolipid biosynthesis. In terms of biological role, glycosyltransferase that catalyzes the transfer of an N-acetylglucosamine (GlcNAc) moiety in beta1-6 linkage from UDP-GlcNAc onto mucin-type core 1 O-glycan to form the branched mucin-type core 2 O-glycan. The catalysis is metal ion-independent and occurs with inversion of the anomeric configuration of sugar donor. Selectively involved in synthesis of mucin-type core 2 O-glycans that serve as scaffolds for the display of selectin ligand sialyl Lewis X epitope by myeloid cells, with an impact on homeostasis and recruitment to inflammatory sites. Can also act on glycolipid substrates. Transfers GlcNAc moiety to GalGb4Cer globosides in a reaction step to the synthesis of stage-specific embryonic antigen 1 (SSEA-1) determinant. Can use Galbeta1-3GalNAcalpha1- and Galbeta1-3GalNAcbeta1- oligosaccharide derivatives as acceptor substrates. The protein is Beta-1,3-galactosyl-O-glycosyl-glycoprotein beta-1,6-N-acetylglucosaminyltransferase (GCNT1) of Homo sapiens (Human).